Reading from the N-terminus, the 445-residue chain is UPF0210 protein SEQ_0468 (445 aa).

Belongs to the UPF0210 family. Homodimer.

The protein is UPF0210 protein SEQ_0468 of Streptococcus equi subsp. equi (strain 4047).